The following is an 816-amino-acid chain: Transducer protein Htr18 (816 aa).

2 helical membrane passes run Val-21–Val-41 and Asn-282–Gly-302. One can recognise an HAMP 1 domain in the interval Arg-303–Gly-356. The tract at residues Asp-399–Leu-425 is disordered. Residues Glu-405 to Ala-418 are compositionally biased toward basic and acidic residues. Positions Ala-423–His-476 constitute an HAMP 2 domain. Positions Ser-495–Gly-731 constitute a Methyl-accepting transducer domain. Positions Gly-790–Thr-816 are disordered. A compositionally biased stretch (polar residues) spans Glu-793 to Ala-803. Basic and acidic residues predominate over residues Ser-804–Thr-816.

Belongs to the methyl-accepting chemotaxis (MCP) protein family. In terms of processing, methylated by CheR.

It localises to the cell membrane. In terms of biological role, potentially involved in chemo- or phototactic signal transduction. The chain is Transducer protein Htr18 (htr18) from Halobacterium salinarum (strain ATCC 29341 / DSM 671 / R1).